We begin with the raw amino-acid sequence, 262 residues long: MDGSVRSEDTWTVAGRTFRSRLIVGTGKYKDYAQNAAAAEAAGAEIVTVAVRRVNLSDPSQPMLVDHVKPDRFTFLPNTAGCFTGEDAIRTLRLAREAGGWDLVKLEVLSNTKHLLPDMEETLRALKLLIADGFQVMVYCSDDPVYAKKLEEAGAAAIMPAAAPIGSGRGIQNALNLALIIEQAKVPVLVDAGVGTASDATIAMELGCDAVLMNTAIAEAKDPIRMARAMRHAVIAGREAYLAGRMPKRMYAEPSSPLSGLI.

Lysine 105 (schiff-base intermediate with DXP) is an active-site residue. 1-deoxy-D-xylulose 5-phosphate is bound by residues glycine 166, 192-193 (AG), and 214-215 (NT).

This sequence belongs to the ThiG family. As to quaternary structure, homotetramer. Forms heterodimers with either ThiH or ThiS.

Its subcellular location is the cytoplasm. It catalyses the reaction [ThiS sulfur-carrier protein]-C-terminal-Gly-aminoethanethioate + 2-iminoacetate + 1-deoxy-D-xylulose 5-phosphate = [ThiS sulfur-carrier protein]-C-terminal Gly-Gly + 2-[(2R,5Z)-2-carboxy-4-methylthiazol-5(2H)-ylidene]ethyl phosphate + 2 H2O + H(+). It functions in the pathway cofactor biosynthesis; thiamine diphosphate biosynthesis. Catalyzes the rearrangement of 1-deoxy-D-xylulose 5-phosphate (DXP) to produce the thiazole phosphate moiety of thiamine. Sulfur is provided by the thiocarboxylate moiety of the carrier protein ThiS. In vitro, sulfur can be provided by H(2)S. This is Thiazole synthase from Phenylobacterium zucineum (strain HLK1).